Here is a 259-residue protein sequence, read N- to C-terminus: tRNA (guanine-N(7)-)-methyltransferase (259 aa).

Positions 1-74 (MGHHGQMHAQ…PAEDPDRPGP (74 aa)) are disordered. 4 residues coordinate S-adenosyl-L-methionine: glutamate 91, glutamate 116, asparagine 143, and aspartate 166. Aspartate 166 is a catalytic residue. Substrate-binding positions include lysine 170, aspartate 202, and 238 to 241 (TKYE).

The protein belongs to the class I-like SAM-binding methyltransferase superfamily. TrmB family.

The catalysed reaction is guanosine(46) in tRNA + S-adenosyl-L-methionine = N(7)-methylguanosine(46) in tRNA + S-adenosyl-L-homocysteine. The protein operates within tRNA modification; N(7)-methylguanine-tRNA biosynthesis. Functionally, catalyzes the formation of N(7)-methylguanine at position 46 (m7G46) in tRNA. This is tRNA (guanine-N(7)-)-methyltransferase from Mycobacterium avium (strain 104).